Consider the following 120-residue polypeptide: Large ribosomal subunit protein uL18 (120 aa).

The protein belongs to the universal ribosomal protein uL18 family. In terms of assembly, part of the 50S ribosomal subunit; part of the 5S rRNA/L5/L18/L25 subcomplex. Contacts the 5S and 23S rRNAs.

Its function is as follows. This is one of the proteins that bind and probably mediate the attachment of the 5S RNA into the large ribosomal subunit, where it forms part of the central protuberance. The sequence is that of Large ribosomal subunit protein uL18 from Ehrlichia ruminantium (strain Gardel).